Here is a 222-residue protein sequence, read N- to C-terminus: N-(5'-phosphoribosyl)anthranilate isomerase (222 aa).

Belongs to the TrpF family.

It catalyses the reaction N-(5-phospho-beta-D-ribosyl)anthranilate = 1-(2-carboxyphenylamino)-1-deoxy-D-ribulose 5-phosphate. The protein operates within amino-acid biosynthesis; L-tryptophan biosynthesis; L-tryptophan from chorismate: step 3/5. The polypeptide is N-(5'-phosphoribosyl)anthranilate isomerase (Brucella abortus (strain S19)).